The sequence spans 496 residues: MARQKIESDIVLIGAGIMSATLGLLLKELNPKLKIEIFERLDIAAAESSDAWNNAGTGHAAFCELNYTPELEDGTIETKKALKISEAFEVSRQLWTYLVEKGLLQNPENFIKSVPHMSLVWGNDNVEYLRKRFEALQQFHLFKTMEFSDNIEKIKEWAPLVMENRNSKDKIAATSMKLGTDVNFGTLTRNMFKYLETLEGVTMHFNHDVYGLKKREDGRWRAKVKNIATGEKKKIFAPFVFIGAGGGSLLLLEKANIPEGQGFGGFPVSGQWLKCTNPEVIQKHSAKVYGKASVGAPPMSVPHIDTRMIDGKKALLFGPYAGFSTKFLKNGSYFDLIKSIEFSNIKPMLGAGVKNIPLTKYLIEQVIQSSDDRLKALKEYVPSAKKEDWVLENAGQRVQVIKKDKDGHGILEFGTEVVTAHDGSLAVLLGASPGASTAVQIMVDLITKCFPEEVKTTIWQNKLKEMIPSYGQSLNENTVLCDQIRAKTNEILKLKV.

It belongs to the MQO family. FAD serves as cofactor.

The catalysed reaction is (S)-malate + a quinone = a quinol + oxaloacetate. It functions in the pathway carbohydrate metabolism; tricarboxylic acid cycle; oxaloacetate from (S)-malate (quinone route): step 1/1. The chain is Probable malate:quinone oxidoreductase from Flavobacterium psychrophilum (strain ATCC 49511 / DSM 21280 / CIP 103535 / JIP02/86).